Here is a 103-residue protein sequence, read N- to C-terminus: Large ribosomal subunit protein uL24 (103 aa).

It belongs to the universal ribosomal protein uL24 family. Part of the 50S ribosomal subunit.

One of two assembly initiator proteins, it binds directly to the 5'-end of the 23S rRNA, where it nucleates assembly of the 50S subunit. Functionally, one of the proteins that surrounds the polypeptide exit tunnel on the outside of the subunit. The protein is Large ribosomal subunit protein uL24 of Haemophilus influenzae (strain PittEE).